The following is a 1171-amino-acid chain: Putative tricorn protease homolog 2 (1171 aa).

Positions 432-498 (AGYPPDAGDE…GSPGTPATAG (67 aa)) are disordered. Low complexity-rich tracts occupy residues 444–456 (AGTA…APDA) and 466–498 (IAAG…ATAG). The Charge relay system role is filled by His827. The interval 842-941 (YQRWQGLLGA…RVAVVPLVDE (100 aa)) is PDZ-like. Substrate is bound at residue 1002-1004 (AGG). Ser1051 serves as the catalytic Nucleophile. Residue 1079 to 1081 (GMT) coordinates substrate. The Charge relay system role is filled by Glu1109. The segment at 1149 to 1171 (PPATPPGYEAVPDRSRPPLPPRE) is disordered. The segment covering 1159–1171 (VPDRSRPPLPPRE) has biased composition (basic and acidic residues).

Belongs to the peptidase S41B family.

It is found in the cytoplasm. Functionally, degrades oligopeptides in a sequential manner. This chain is Putative tricorn protease homolog 2 (tri2), found in Streptomyces coelicolor (strain ATCC BAA-471 / A3(2) / M145).